The sequence spans 981 residues: Ubiquitin carboxyl-terminal hydrolase 15 (981 aa).

Position 2 is an N-acetylalanine (alanine 2). The tract at residues 2–223 (AEGGAADLDT…KNEDGTWPRG (222 aa)) is mediates interaction with SART3. Residues 7–118 (ADLDTQRSDI…GQEPIARKVV (112 aa)) enclose the DUSP domain. The interval 216–237 (EDGTWPRGPSTPKSPGASNFST) is disordered. Threonine 226 is modified (phosphothreonine). A compositionally biased stretch (polar residues) spans 226–237 (TPKSPGASNFST). Phosphoserine is present on residues serine 229 and serine 242. The 645-residue stretch at 289-933 (CGLSNLGNTC…AAYVLFYQRQ (645 aa)) folds into the USP domain. The active-site Nucleophile is cysteine 298. At threonine 602 the chain carries Phosphothreonine. The segment at 633–694 (CCEDQNINGN…GGDNDSENGL (62 aa)) is disordered. Residues 656–673 (METDEPDDESSQDQELPS) show a composition bias toward acidic residues. Histidine 891 (proton acceptor) is an active-site residue. The tract at residues 952 to 981 (SAATGIPLESDEDSNDNDNDLENENCMHTN) is disordered. Residues 960–974 (ESDEDSNDNDNDLEN) are compositionally biased toward acidic residues. Residues serine 961 and serine 965 each carry the phosphoserine modification.

This sequence belongs to the peptidase C19 family. As to quaternary structure, a homodimer structure has been reported; however it is unclear whether the protein form a homodimer in vivo. Identified in a complex with the COP9 signalosome complex (CSN). Interacts with SMAD1, SMAD2 and SMAD3; the interaction is direct. Forms a complex with SMURF2 and SMAD7. Interacts with TGFBR1. Interacts with SART3; the interaction is direct. May interact with RNF20 and RNF40. May interact with PRKN. Interacts with INCA1. In terms of processing, phosphorylated. Phosphorylation protects against ubiquitination and subsequent degradation by the proteasome. Ubiquitinated, leading to degradation by the proteasome. In terms of tissue distribution, widely expressed with highest levels in the brain and spleen, and lowest levels in the muscles (at protein level). In the midbrain, strong expression in neurons including the dopaminergic neurons (at protein level). Widely expressed with highest levels in testis, heart and liver.

It is found in the cytoplasm. The protein localises to the nucleus. Its subcellular location is the mitochondrion. The enzyme catalyses Thiol-dependent hydrolysis of ester, thioester, amide, peptide and isopeptide bonds formed by the C-terminal Gly of ubiquitin (a 76-residue protein attached to proteins as an intracellular targeting signal).. In terms of biological role, hydrolase that removes conjugated ubiquitin from target proteins and regulates various pathways such as the TGF-beta receptor signaling, NF-kappa-B and RNF41/NRDP1-PRKN pathways. Acts as a key regulator of TGF-beta receptor signaling pathway, but the precise mechanism is still unclear: according to a report, acts by promoting deubiquitination of monoubiquitinated R-SMADs (SMAD1, SMAD2 and/or SMAD3), thereby alleviating inhibition of R-SMADs and promoting activation of TGF-beta target genes. According to another reports, regulates the TGF-beta receptor signaling pathway by mediating deubiquitination and stabilization of TGFBR1, leading to an enhanced TGF-beta signal. Able to mediate deubiquitination of monoubiquitinated substrates, 'Lys-27'-, 'Lys-48'- and 'Lys-63'-linked polyubiquitin chains. May also regulate gene expression and/or DNA repair through the deubiquitination of histone H2B. Acts as an inhibitor of mitophagy by counteracting the action of parkin (PRKN): hydrolyzes cleavage of 'Lys-48'- and 'Lys-63'-linked polyubiquitin chains attached by parkin on target proteins such as MFN2, thereby reducing parkin's ability to drive mitophagy. Acts as an associated component of COP9 signalosome complex (CSN) and regulates different pathways via this association: regulates NF-kappa-B by mediating deubiquitination of NFKBIA and deubiquitinates substrates bound to VCP. Involved in endosome organization by mediating deubiquitination of SQSTM1: ubiquitinated SQSTM1 forms a molecular bridge that restrains cognate vesicles in the perinuclear region and its deubiquitination releases target vesicles for fast transport into the cell periphery. Acts as a negative regulator of antifungal immunity by mediating 'Lys-27'-linked deubiquitination of CARD9, thereby inactivating CARD9. In Mus musculus (Mouse), this protein is Ubiquitin carboxyl-terminal hydrolase 15 (Usp15).